A 93-amino-acid polypeptide reads, in one-letter code: UPF0147 protein MM_1385 (93 aa).

The protein belongs to the UPF0147 family.

The protein is UPF0147 protein MM_1385 of Methanosarcina mazei (strain ATCC BAA-159 / DSM 3647 / Goe1 / Go1 / JCM 11833 / OCM 88) (Methanosarcina frisia).